The following is a 234-amino-acid chain: MIDQGRKSLEERVGHQFKNPALLERALTHKSFANELRNTVEHNEKLEFLGDAVLDLVVGEFLYEKFPTDTEGGLSKKRASIVNEEVLSELALEMGLNKLMQLGKGEALTGGAQKPRLIASSFEAIVGALYLDGGFEVARSFIRQEFVPLADRVCGHEDFERDYKTRLQELVQKSSKETPRYEVLAEEGPPHDREFLVCVKVKEDVWAQGRGRSKKNAEQMAAKNALEMKYKETN.

The 129-residue stretch at 6-134 folds into the RNase III domain; sequence RKSLEERVGH…IVGALYLDGG (129 aa). Glutamate 47 is a Mg(2+) binding site. Residue aspartate 51 is part of the active site. Positions 120 and 123 each coordinate Mg(2+). The active site involves glutamate 123. Residues 162–231 form the DRBM domain; that stretch reads DYKTRLQELV…AKNALEMKYK (70 aa).

It belongs to the ribonuclease III family. As to quaternary structure, homodimer. Requires Mg(2+) as cofactor.

The protein localises to the cytoplasm. It catalyses the reaction Endonucleolytic cleavage to 5'-phosphomonoester.. Functionally, digests double-stranded RNA. Involved in the processing of primary rRNA transcript to yield the immediate precursors to the large and small rRNAs (23S and 16S). Processes some mRNAs, and tRNAs when they are encoded in the rRNA operon. Processes pre-crRNA and tracrRNA of type II CRISPR loci if present in the organism. This chain is Ribonuclease 3, found in Bdellovibrio bacteriovorus (strain ATCC 15356 / DSM 50701 / NCIMB 9529 / HD100).